Consider the following 314-residue polypeptide: DNA-directed RNA polymerase subunit alpha (314 aa).

Positions Met-1–Thr-228 are alpha N-terminal domain (alpha-NTD). The alpha C-terminal domain (alpha-CTD) stretch occupies residues Glu-246–Asp-314.

The protein belongs to the RNA polymerase alpha chain family. Homodimer. The RNAP catalytic core consists of 2 alpha, 1 beta, 1 beta' and 1 omega subunit. When a sigma factor is associated with the core the holoenzyme is formed, which can initiate transcription.

It catalyses the reaction RNA(n) + a ribonucleoside 5'-triphosphate = RNA(n+1) + diphosphate. Functionally, DNA-dependent RNA polymerase catalyzes the transcription of DNA into RNA using the four ribonucleoside triphosphates as substrates. This is DNA-directed RNA polymerase subunit alpha from Bacillus cytotoxicus (strain DSM 22905 / CIP 110041 / 391-98 / NVH 391-98).